Reading from the N-terminus, the 104-residue chain is Ig lambda-2 chain C region (104 aa).

In terms of domain architecture, Ig-like spans 6 to 99 (PTLTVFPPSS…EGDTVEKSLS (94 aa)). A disulfide bridge links Cys-27 with Cys-85.

This chain is Ig lambda-2 chain C region (Iglc2), found in Mus musculus (Mouse).